The primary structure comprises 265 residues: MGAAVFFGCTFVAFGPAFALFLITVAGDPLRVIILVAGAFFWLVSLLLASVVWFILVHVTDRSDARLQYGLLIFGAAVSVLLQEVFRFAYYKLLKKADEGLASLSEDGRSPISIRQMAYVSGLSFGIISGVFSVINILADALGPGVVGIHGDSPYYFLTSAFLTAAIILLHTFWGVVFFDACERRRYWALGLVVGSHLLTSGLTFLNPWYEASLLPIYAVTVSMGLWAFITAGGSLRSIQRSLLCRRQEDSRVMVYSALRIPPED.

At 1 to 2 (MG) the chain is on the lumenal side. The chain crosses the membrane as a helical span at residues 3–23 (AAVFFGCTFVAFGPAFALFLI). The Cytoplasmic portion of the chain corresponds to 24 to 31 (TVAGDPLR). Residues 32–52 (VIILVAGAFFWLVSLLLASVV) traverse the membrane as a helical segment. Over 53-68 (WFILVHVTDRSDARLQ) the chain is Lumenal. Residues 69–89 (YGLLIFGAAVSVLLQEVFRFA) form a helical membrane-spanning segment. Topologically, residues 90 to 118 (YYKLLKKADEGLASLSEDGRSPISIRQMA) are cytoplasmic. A helical transmembrane segment spans residues 119 to 139 (YVSGLSFGIISGVFSVINILA). Residues 140-158 (DALGPGVVGIHGDSPYYFL) lie on the Lumenal side of the membrane. A helical transmembrane segment spans residues 159-179 (TSAFLTAAIILLHTFWGVVFF). Topologically, residues 180 to 186 (DACERRR) are cytoplasmic. A helical membrane pass occupies residues 187–207 (YWALGLVVGSHLLTSGLTFLN). Over 208–213 (PWYEAS) the chain is Lumenal. The chain crosses the membrane as a helical span at residues 214-234 (LLPIYAVTVSMGLWAFITAGG). Topologically, residues 235-265 (SLRSIQRSLLCRRQEDSRVMVYSALRIPPED) are cytoplasmic.

This sequence belongs to the APH-1 family. As to quaternary structure, the functional gamma-secretase complex is composed of at least four polypeptides: a presenilin homodimer (PSEN1 or PSEN2), nicastrin (NCSTN), APH1 (APH1A or APH1B) and PSENEN/PEN2. Widely expressed. Expressed in leukocytes, lung, placenta, small intestine, liver, kidney, spleen thymus, skeletal muscle, heart and brain. Isoform 1 and isoform 2 are nearly expressed at the same level.

The protein resides in the endoplasmic reticulum membrane. The protein localises to the golgi apparatus. It localises to the golgi stack membrane. In terms of biological role, non-catalytic subunit of the gamma-secretase complex, an endoprotease complex that catalyzes the intramembrane cleavage of integral membrane proteins such as Notch receptors and APP (amyloid-beta precursor protein). Required for normal gamma-secretase assembly. The gamma-secretase complex plays a role in Notch and Wnt signaling cascades and regulation of downstream processes via its role in processing key regulatory proteins, and by regulating cytosolic CTNNB1 levels. The protein is Gamma-secretase subunit APH-1A (APH1A) of Homo sapiens (Human).